A 201-amino-acid chain; its full sequence is 3-isopropylmalate dehydratase small subunit (201 aa).

The protein belongs to the LeuD family. LeuD type 1 subfamily. In terms of assembly, heterodimer of LeuC and LeuD.

It carries out the reaction (2R,3S)-3-isopropylmalate = (2S)-2-isopropylmalate. Its pathway is amino-acid biosynthesis; L-leucine biosynthesis; L-leucine from 3-methyl-2-oxobutanoate: step 2/4. Its function is as follows. Catalyzes the isomerization between 2-isopropylmalate and 3-isopropylmalate, via the formation of 2-isopropylmaleate. The protein is 3-isopropylmalate dehydratase small subunit of Parvibaculum lavamentivorans (strain DS-1 / DSM 13023 / NCIMB 13966).